Reading from the N-terminus, the 541-residue chain is Centrosomal protein of 63 kDa (541 aa).

Met1 bears the N-acetylmethionine mark. 2 coiled-coil regions span residues 22-199 (EAEL…ESVE) and 242-305 (MTVL…TQHA). Ser278 is modified (phosphoserine). The tract at residues 294–324 (QEKVKATDTQHAVEAIRPREESPAEKKYTSQ) is disordered. The span at 307-321 (EAIRPREESPAEKKY) shows a compositional bias: basic and acidic residues. 2 coiled-coil regions span residues 346 to 485 (LQAE…KLEL) and 514 to 541 (HILE…TALK).

Belongs to the CEP63 family. In terms of assembly, interacts with CEP152 and CDK1; these interactions recruit both ligands to centrosomes. Interacts with CDK2, CDK5RAP2, WDR62, CEP90, KIAA0753/moonraker and CCDC14. CEP63, CDK5RAP2, CEP152, WDR62 are proposed to form a stepwise assembled complex at the centrosome forming a ring near parental centrioles. Interacts with CCDC57; the interaction is required for their location to proximal end of centrioles. Interacts with FXR1; promoting its stabilization. In terms of processing, polyubiquitinated via 'Lys-48'-linked ubiquitin, leading to its degradation. Deubiquitinated by USP36, promoting its stabilization.

The protein localises to the cytoplasm. It is found in the cytoskeleton. Its subcellular location is the microtubule organizing center. It localises to the centrosome. The protein resides in the centriole. The protein localises to the centriolar satellite. In terms of biological role, required for normal spindle assembly. Plays a key role in mother-centriole-dependent centriole duplication; the function seems also to involve CEP152, CDK5RAP2 and WDR62 through a stepwise assembled complex at the centrosome that recruits CDK2 required for centriole duplication. Reported to be required for centrosomal recruitment of CEP152; however, this function has been questioned. Also recruits CDK1 to centrosomes. Plays a role in DNA damage response. Following DNA damage, such as double-strand breaks (DSBs), is removed from centrosomes; this leads to the inactivation of spindle assembly and delay in mitotic progression. Promotes stabilization of FXR1 protein by inhibiting FXR1 ubiquitination. This chain is Centrosomal protein of 63 kDa (CEP63), found in Pongo abelii (Sumatran orangutan).